The chain runs to 388 residues: 5-hydroxytryptamine receptor 1B (388 aa).

Positions 1 to 29 (MEQPSRLCSPPASGSLTSSQTNHSTFPNP) are disordered. The Extracellular portion of the chain corresponds to 1–45 (MEQPSRLCSPPASGSLTSSQTNHSTFPNPNCSAPDLEPYQDSIAL). Over residues 12 to 29 (ASGSLTSSQTNHSTFPNP) the composition is skewed to polar residues. N-linked (GlcNAc...) asparagine glycans are attached at residues N22 and N30. A helical transmembrane segment spans residues 46 to 71 (PWKVLLATFLGLITLGTTLSNAFVIA). The Cytoplasmic portion of the chain corresponds to 72-85 (TVSRTRKLHTPANY). A helical transmembrane segment spans residues 86 to 110 (LIASLAVTDLLVSILVMPISTMYTV). The Extracellular portion of the chain corresponds to 111-118 (TGRWTLGQ). The chain crosses the membrane as a helical span at residues 119 to 144 (VVCDFWLSSDITCCTASILHLCVIAL). An intrachain disulfide couples C121 to C197. Residues D128 and T133 each contribute to the ergotamine site. Positions 145–147 (DRY) match the DRY motif; important for ligand-induced conformation changes and signaling motif. Over 145–164 (DRYWAITDAVEYSAKRTPKR) the chain is Cytoplasmic. A helical membrane pass occupies residues 165–183 (AAGMIIMVWVFSVSISMPP). The Extracellular portion of the chain corresponds to 184-203 (LFWRQAKAEEVADCSVNTDH). Residue V199 participates in ergotamine binding. Residues 204-227 (ILYTVYSTVGAFYFPTLLLIALYG) traverse the membrane as a helical segment. Residues 228 to 313 (RIYVEARSRI…AARERKATRT (86 aa)) are Cytoplasmic-facing. Residues 249 to 282 (LTRAQLITDSPGSSSSGTSINSRAPEGPSESGSP) form a disordered region. Over residues 255–270 (ITDSPGSSSSGTSINS) the composition is skewed to low complexity. A helical transmembrane segment spans residues 314 to 335 (LGIILGAFIVCWLPFFIISLAL). The Extracellular portion of the chain corresponds to 336–345 (PICDDACWFH). A helical membrane pass occupies residues 346-368 (LAIFDFFNWLGYLNSLINPIIYT). Positions 363–367 (NPIIY) match the NPxxY motif; important for ligand-induced conformation changes and signaling motif. The Cytoplasmic portion of the chain corresponds to 369-388 (KSNDDFKQAFQKLMRFRRTS).

This sequence belongs to the G-protein coupled receptor 1 family. Homodimer. Heterodimer with HTR1D. In terms of processing, phosphorylated. Desensitization of the receptor may be mediated by its phosphorylation. Post-translationally, palmitoylated.

The protein localises to the cell membrane. In terms of biological role, G-protein coupled receptor for 5-hydroxytryptamine (serotonin). Also functions as a receptor for ergot alkaloid derivatives, various anxiolytic and antidepressant drugs and other psychoactive substances, such as lysergic acid diethylamide (LSD). Ligand binding causes a conformation change that triggers signaling via guanine nucleotide-binding proteins (G proteins) and modulates the activity of downstream effectors, such as adenylate cyclase. HTR1B is coupled to G(i)/G(o) G alpha proteins and mediates inhibitory neurotransmission by inhibiting adenylate cyclase activity. Arrestin family members inhibit signaling via G proteins and mediate activation of alternative signaling pathways. Regulates the release of 5-hydroxytryptamine, dopamine and acetylcholine in the brain, and thereby affects neural activity, nociceptive processing, pain perception, mood and behavior. Besides, plays a role in vasoconstriction of cerebral arteries. This chain is 5-hydroxytryptamine receptor 1B (HTR1B), found in Didelphis virginiana (North American opossum).